The sequence spans 852 residues: DNA mismatch repair protein MutS (852 aa).

602–609 lines the ATP pocket; it reads GPNMSGKS.

The protein belongs to the DNA mismatch repair MutS family.

This protein is involved in the repair of mismatches in DNA. It is possible that it carries out the mismatch recognition step. This protein has a weak ATPase activity. The protein is DNA mismatch repair protein MutS of Streptococcus thermophilus (strain ATCC BAA-250 / LMG 18311).